Consider the following 196-residue polypeptide: Small ribosomal subunit protein uS4c (196 aa).

Residues 20-39 (GLTRKTPKSGSNLKKKFHSG) are disordered. The region spanning 89 to 152 (MRLDNILFRL…RSKCLVQNSI (64 aa)) is the S4 RNA-binding domain.

The protein belongs to the universal ribosomal protein uS4 family. As to quaternary structure, part of the 30S ribosomal subunit. Contacts protein S5. The interaction surface between S4 and S5 is involved in control of translational fidelity.

Its subcellular location is the plastid. It localises to the chloroplast. Functionally, one of the primary rRNA binding proteins, it binds directly to 16S rRNA where it nucleates assembly of the body of the 30S subunit. Its function is as follows. With S5 and S12 plays an important role in translational accuracy. The chain is Small ribosomal subunit protein uS4c (rps4) from Dendrocalamus giganteus (Giant bamboo).